The sequence spans 308 residues: 1D-myo-inositol 2-acetamido-2-deoxy-alpha-D-glucopyranoside deacetylase (308 aa).

Histidine 13, aspartate 16, and histidine 147 together coordinate Zn(2+).

This sequence belongs to the MshB deacetylase family. The cofactor is Zn(2+).

It catalyses the reaction 1D-myo-inositol 2-acetamido-2-deoxy-alpha-D-glucopyranoside + H2O = 1D-myo-inositol 2-amino-2-deoxy-alpha-D-glucopyranoside + acetate. Functionally, catalyzes the deacetylation of 1D-myo-inositol 2-acetamido-2-deoxy-alpha-D-glucopyranoside (GlcNAc-Ins) in the mycothiol biosynthesis pathway. This Mycobacterium leprae (strain Br4923) protein is 1D-myo-inositol 2-acetamido-2-deoxy-alpha-D-glucopyranoside deacetylase.